A 429-amino-acid chain; its full sequence is Enolase (429 aa).

Glutamine 164 serves as a coordination point for (2R)-2-phosphoglycerate. Glutamate 206 (proton donor) is an active-site residue. Residues aspartate 243, glutamate 286, and aspartate 313 each coordinate Mg(2+). Positions 338, 367, 368, and 389 each coordinate (2R)-2-phosphoglycerate. The active-site Proton acceptor is the lysine 338.

The protein belongs to the enolase family. Mg(2+) serves as cofactor.

The protein localises to the cytoplasm. It localises to the secreted. It is found in the cell surface. The catalysed reaction is (2R)-2-phosphoglycerate = phosphoenolpyruvate + H2O. It participates in carbohydrate degradation; glycolysis; pyruvate from D-glyceraldehyde 3-phosphate: step 4/5. In terms of biological role, catalyzes the reversible conversion of 2-phosphoglycerate (2-PG) into phosphoenolpyruvate (PEP). It is essential for the degradation of carbohydrates via glycolysis. This is Enolase from Thermosipho melanesiensis (strain DSM 12029 / CIP 104789 / BI429).